Here is a 537-residue protein sequence, read N- to C-terminus: CTP synthase (537 aa).

The interval 1 to 267 is amidoligase domain; the sequence is MAKYIFVTGG…DEYVIKRLNL (267 aa). Position 13 (Ser-13) interacts with CTP. Residue Ser-13 coordinates UTP. 14–19 contacts ATP; sequence SLGKGI. Tyr-54 contacts L-glutamine. Residue Asp-71 participates in ATP binding. The Mg(2+) site is built by Asp-71 and Glu-141. Residues 148–150, 188–193, and Lys-224 contribute to the CTP site; these read DIE and KTKPTQ. UTP-binding positions include 188 to 193 and Lys-224; that span reads KTKPTQ. 240–242 is an ATP binding site; that stretch reads RDV. The Glutamine amidotransferase type-1 domain occupies 292-534; the sequence is EVALVGKYVD…VKAMLNLKIN (243 aa). An L-glutamine-binding site is contributed by Gly-354. Cys-381 serves as the catalytic Nucleophile; for glutamine hydrolysis. L-glutamine-binding positions include 382 to 385, Glu-405, and Arg-462; that span reads LGMQ. Catalysis depends on residues His-507 and Glu-509.

This sequence belongs to the CTP synthase family. Homotetramer.

The catalysed reaction is UTP + L-glutamine + ATP + H2O = CTP + L-glutamate + ADP + phosphate + 2 H(+). The enzyme catalyses L-glutamine + H2O = L-glutamate + NH4(+). It catalyses the reaction UTP + NH4(+) + ATP = CTP + ADP + phosphate + 2 H(+). It functions in the pathway pyrimidine metabolism; CTP biosynthesis via de novo pathway; CTP from UDP: step 2/2. With respect to regulation, allosterically activated by GTP, when glutamine is the substrate; GTP has no effect on the reaction when ammonia is the substrate. The allosteric effector GTP functions by stabilizing the protein conformation that binds the tetrahedral intermediate(s) formed during glutamine hydrolysis. Inhibited by the product CTP, via allosteric rather than competitive inhibition. Catalyzes the ATP-dependent amination of UTP to CTP with either L-glutamine or ammonia as the source of nitrogen. Regulates intracellular CTP levels through interactions with the four ribonucleotide triphosphates. The polypeptide is CTP synthase (Caldanaerobacter subterraneus subsp. tengcongensis (strain DSM 15242 / JCM 11007 / NBRC 100824 / MB4) (Thermoanaerobacter tengcongensis)).